Consider the following 106-residue polypeptide: Insulin-like peptide 04 (106 aa).

Positions 1–22 are cleaved as a signal peptide; the sequence is MPRTFLVVLIYILAGFLCSTSA. The propeptide occupies 23 to 37; the sequence is LRKVNEASGIKTDGS. Disulfide bonds link C45–C50, C46–C80, and C59–C68. Residues 86–106 constitute a propeptide, c peptide; that stretch reads RRKRSLTVDKREAKKFIRQRR.

Belongs to the insulin family.

It localises to the secreted. Its function is as follows. Insulin decreases blood glucose concentration. May have evolved to activate insulin receptors (INSR) in vertebrates. Molecular docking studies reveals unique interaction with the human insulin receptor. In vivo, insulin-like peptide injection reduces blood glucose levels in two models of zebrafish diabetes (streptozotocin- and glucose-induced). Also shorter swimming distance of zebrafish larvae, an effect which is not observed with human insulin. This is Insulin-like peptide 04 from Exaiptasia diaphana (Tropical sea anemone).